We begin with the raw amino-acid sequence, 284 residues long: Formate channel FocA (284 aa).

The Cytoplasmic segment spans residues 1–34 (MASENQKLSSVALTPVEATDYAENTATYKANKRP). Residues 35 to 55 (FLSFMSGISAGACIALAFVFY) form a helical membrane-spanning segment. Residues 56 to 72 (TTTQTASAGAPWGLTKL) lie on the Periplasmic side of the membrane. The chain crosses the membrane as a helical span at residues 73-93 (VGGLVFSLGVIMVVILGSELF). Topologically, residues 94–116 (TSSTLTLVARVGGRITTTQMIRN) are cytoplasmic. Residues 117 to 137 (WIVVYLGNFVGGLFIAAVIWF) traverse the membrane as a helical segment. Residues 138–163 (SGQTMAANGQWGLTILATAQHKIHHT) lie on the Periplasmic side of the membrane. Residues 164-184 (WFEAFNLGILCNIMVCVAVWM) traverse the membrane as a helical segment. Topologically, residues 185–194 (SYSGKTVTDK) are cytoplasmic. The helical transmembrane segment at 195–215 (AFIMIMPIGLFVASGFEHCVA) threads the bilayer. Over 216–252 (NMFMIPMGIITAHFSTPEFWQQIGVDPMKYADLDLYH) the chain is Periplasmic. A helical membrane pass occupies residues 253 to 273 (FIVKNLIPVTLGNIVGGAICI). At 274-284 (GVFQRYLTKTH) the chain is on the cytoplasmic side.

This sequence belongs to the FNT transporter (TC 1.A.16) family. In terms of assembly, homopentamer.

The protein resides in the cell inner membrane. It carries out the reaction formate(in) = formate(out). Its function is as follows. Involved in the bidirectional transport of formate during mixed-acid fermentation. Functions to maintain relatively constant intracellular formate levels during growth, using different mechanisms for efflux and uptake of the anion. The chain is Formate channel FocA (focA) from Haemophilus influenzae (strain ATCC 51907 / DSM 11121 / KW20 / Rd).